The chain runs to 60 residues: MDHRLLEIIACPVCNGKLWYNQEKQEIICKLDNLAFPLRDGIPVLLETEARVLTADESKS.

The protein belongs to the UPF0434 family.

The polypeptide is UPF0434 protein YcaR (Escherichia coli O81 (strain ED1a)).